Consider the following 389-residue polypeptide: Krueppel-like factor 17 (389 aa).

2 disordered regions span residues 1 to 48 and 239 to 279; these read MYGR…SGVH and LVSQ…GSSE. A compositionally biased stretch (polar residues) spans 26–38; it reads AQDNENSAPILNM. A compositionally biased stretch (basic and acidic residues) spans 264–278; it reads KNSRPQEGTGRRGSS. 3 C2H2-type zinc fingers span residues 283–307, 313–337, and 343–365; these read YCCNYENCGKAYTKRSHLVSHQRKH, YSCNWESCSWSFFRSDELRRHMRVH, and YKCDQCSREFMRSDHLKQHQKTH. A disordered region spans residues 356-389; it reads DHLKQHQKTHRPGPSDPQANNNNGEQDSPPAAGP. The segment covering 372–381 has biased composition (polar residues); sequence PQANNNNGEQ.

It belongs to the Sp1 C2H2-type zinc-finger protein family.

It is found in the nucleus. In terms of biological role, transcription repressor that binds to the promoter of target genes and prevents their expression. Acts as a negative regulator of epithelial-mesenchymal transition and metastasis in breast cancer. Specifically binds the 5'-CACCC-3' sequence in the promoter of ID1, a key metastasis regulator in breast cancer, and repress its expression. May be a germ cell-specific transcription factor that plays important roles in spermatid differentiation and oocyte development. This is Krueppel-like factor 17 (KLF17) from Homo sapiens (Human).